A 116-amino-acid chain; its full sequence is MPGDNWTNSIIFRIKTLKDQIIEWSKNPTEENEYFSEKYLEKINTLTKTLDWCEKSNKSEVELRWLNQALSLPHQVPPPRYSYIRSESSRNNLRNSARNQPQNLVSEQDSDSNREN.

Positions 76-116 are disordered; the sequence is VPPPRYSYIRSESSRNNLRNSARNQPQNLVSEQDSDSNREN. Over residues 85 to 99 the composition is skewed to low complexity; it reads RSESSRNNLRNSARN.

This is an uncharacterized protein from Glycine max (Soybean).